Consider the following 734-residue polypeptide: Photosystem I P700 chlorophyll a apoprotein A2 (734 aa).

A run of 8 helical transmembrane segments spans residues 46 to 69 (IFAS…FHVA), 135 to 158 (LYTG…LHLQ), 175 to 199 (LNHH…HVAI), 273 to 291 (MAHH…GHMY), 330 to 353 (IHFQ…QHMY), 369 to 395 (AALY…IFFI), 417 to 439 (AIIS…LYVH), and 517 to 535 (FLVH…LILV). Residues Cys-559 and Cys-568 each contribute to the [4Fe-4S] cluster site. A run of 2 helical transmembrane segments spans residues 575–596 (AFYL…YWHW) and 643–665 (LSVW…MFLI). Chlorophyll a-binding residues include His-654, Met-662, and Tyr-670. Residue Trp-671 coordinates phylloquinone. The chain crosses the membrane as a helical span at residues 707 to 727 (LVGLAHFSVGYIFTYAAFLIA).

Belongs to the PsaA/PsaB family. In terms of assembly, the PsaA/B heterodimer binds the P700 chlorophyll special pair and subsequent electron acceptors. PSI consists of a core antenna complex that captures photons, and an electron transfer chain that converts photonic excitation into a charge separation. The eukaryotic PSI reaction center is composed of at least 11 subunits. The cofactor is P700 is a chlorophyll a/chlorophyll a' dimer, A0 is one or more chlorophyll a, A1 is one or both phylloquinones and FX is a shared 4Fe-4S iron-sulfur center..

It localises to the plastid. It is found in the chloroplast thylakoid membrane. The enzyme catalyses reduced [plastocyanin] + hnu + oxidized [2Fe-2S]-[ferredoxin] = oxidized [plastocyanin] + reduced [2Fe-2S]-[ferredoxin]. Functionally, psaA and PsaB bind P700, the primary electron donor of photosystem I (PSI), as well as the electron acceptors A0, A1 and FX. PSI is a plastocyanin-ferredoxin oxidoreductase, converting photonic excitation into a charge separation, which transfers an electron from the donor P700 chlorophyll pair to the spectroscopically characterized acceptors A0, A1, FX, FA and FB in turn. Oxidized P700 is reduced on the lumenal side of the thylakoid membrane by plastocyanin. The sequence is that of Photosystem I P700 chlorophyll a apoprotein A2 from Arabis hirsuta (Hairy rock-cress).